A 221-amino-acid polypeptide reads, in one-letter code: Ras-related protein RabS (221 aa).

16–23 (GDNQCGKS) serves as a coordination point for GTP. The Effector region motif lies at 38-47 (GIQLWHGIEI). Residues 71–75 (DGNGG) and 137–140 (NKCD) each bind GTP. A Cysteine methyl ester modification is found at Cys-218. A lipid anchor (S-geranylgeranyl cysteine) is attached at Cys-218. Positions 219 to 221 (IIN) are cleaved as a propeptide — removed in mature form.

It belongs to the small GTPase superfamily. Rab family.

The protein localises to the cell membrane. In Dictyostelium discoideum (Social amoeba), this protein is Ras-related protein RabS (rabS).